Here is a 184-residue protein sequence, read N- to C-terminus: Putative tetraheme cytochrome-c type (184 aa).

Residues 1-14 are Cytoplasmic-facing; sequence MSKHAASSAKRFSL. Residues 15–35 form a helical membrane-spanning segment; that stretch reads LALGLMFVGGIVFVWAVDFGI. Residues 36-184 are Periplasmic-facing; it reads KTTNTLEFCT…HEPTEPDDAS (149 aa). 6 residues coordinate heme: C44, C47, M50, C73, C76, and H77. Positions 89 and 95 each coordinate substrate. Residues D95, C133, C136, H137, C165, C168, H169, and H174 each contribute to the heme site.

It belongs to the NapC/NirT/NrfH family. Binds 4 heme groups per subunit.

It is found in the cell inner membrane. This is Putative tetraheme cytochrome-c type from Allochromatium vinosum (strain ATCC 17899 / DSM 180 / NBRC 103801 / NCIMB 10441 / D) (Chromatium vinosum).